A 274-amino-acid chain; its full sequence is MNEKHQIMQTEKNDGQNITELDFSGYPIEKEIKGFIHYFLILVNKNLSLSREIEMVKKNSLSDLESMKSFYNTNFGKGNSDLMSKVVVYFSNKIAQRSNNVISGYVDLEKEAKELLEKLNKLGIEASVGKTETLDSKKKLEILKNKKEYLQNEVKKSKGFFRSVFLFFFGDNKKNEFSEKICSIEKEMEKINENMKESEMEIFIQKTQNLMNCLTYATHYILDIKSNFHIMKLINHELLNNDFSLCCQDKELMNGIYSKTKDLLTNSNLKSLGQ.

Residues 99–206 (NNVISGYVDL…ESEMEIFIQK (108 aa)) adopt a coiled-coil conformation.

This is an uncharacterized protein from Dictyostelium discoideum (Social amoeba).